The sequence spans 477 residues: SH3 domain-binding protein 5 homolog (477 aa).

Positions 12-95 (QIQIELENLN…AAVKFQRANE (84 aa)) form a coiled coil. Phosphoserine is present on residues Ser113 and Ser115. A coiled-coil region spans residues 122–221 (NAWQEMLNHA…YSTALRNLER (100 aa)). 2 disordered regions span residues 224-258 (EDIH…ALPS) and 276-306 (GSQM…ETGA). The span at 291–305 (ETEDEEDACDYDETG) shows a compositional bias: acidic residues.

Belongs to the SH3BP5 family.

In Drosophila melanogaster (Fruit fly), this protein is SH3 domain-binding protein 5 homolog (pcs).